A 425-amino-acid polypeptide reads, in one-letter code: Protein CLP1 homolog (425 aa).

ATP is bound by residues E18, K59, and 121 to 126; that span reads DVGKST.

Belongs to the Clp1 family. Clp1 subfamily.

It is found in the nucleus. In terms of biological role, required for endonucleolytic cleavage during polyadenylation-dependent pre-mRNA 3'-end formation. The chain is Protein CLP1 homolog (cbc) from Drosophila pseudoobscura pseudoobscura (Fruit fly).